The following is a 248-amino-acid chain: ATP synthase subunit a (248 aa).

A run of 6 helical transmembrane segments spans residues 27-47 (FTNS…LMLV), 83-103 (FFPL…IGIV), 113-133 (LIVT…YGFS), 142-162 (LFVP…IEVI), 192-212 (FVAM…LPLG), and 215-235 (IALT…FAIL).

This sequence belongs to the ATPase A chain family. In terms of assembly, F-type ATPases have 2 components, CF(1) - the catalytic core - and CF(0) - the membrane proton channel. CF(1) has five subunits: alpha(3), beta(3), gamma(1), delta(1), epsilon(1). CF(0) has four main subunits: a, b, b' and c.

It is found in the cell inner membrane. Its function is as follows. Key component of the proton channel; it plays a direct role in the translocation of protons across the membrane. In Rhodopseudomonas palustris (strain ATCC BAA-98 / CGA009), this protein is ATP synthase subunit a.